A 34-amino-acid polypeptide reads, in one-letter code: Protamine-Z1/Z2 (34 aa).

The interval 1-34 (PRRRRRSSRPVRRRRRYRRSTAARRRRRVVRRRR) is disordered.

In terms of tissue distribution, testis.

It localises to the nucleus. The protein localises to the chromosome. Functionally, protamines substitute for histones in the chromatin of sperm during the haploid phase of spermatogenesis. They compact sperm DNA into a highly condensed, stable and inactive complex. The polypeptide is Protamine-Z1/Z2 (Sarda orientalis (Striped bonito)).